A 372-amino-acid polypeptide reads, in one-letter code: MFFNIFKSSIKGFLLNLPTPINLNYWYGFGSMLGLIYSIQIISGLILSWFYFIDLSGGFKSLILIMQDVWGGWFIRFIHSSGVSLFMFIMYLHILRGLIYGSFCKVDVWYSGILLLFICMGSAFLGYVLPWGSMSYWGMTVVTNMLSAIPMVGVYLVETIWGGSSAGVSTLVRFFSFHYLLSLFIMVFILIHLILLHECGSSNPLGVYYSCEKFTFHPLFSLKDTLVFVLVVFLYWFCIFVCPYLLLDAINFEEINFMMTPSHIKPEWYFLFIYCILRSTPSKLGGVILMVMAILMLVFLGIGKNLGSVLMVKTLYWKLMLSSFLLVFIILTIMGGYTVEYPYDILGNVNSVLYFFIYVIMLLYSFMFNFVY.

Transmembrane regions (helical) follow at residues Phe-29–Trp-49, Trp-73–Leu-95, Val-108–Val-128, and Phe-174–Ile-194. Residues His-79 and His-93 each contribute to the heme b site. 2 residues coordinate heme b: His-178 and His-192. Position 197 (His-197) interacts with a ubiquinone. 4 helical membrane-spanning segments follow: residues Phe-220–Phe-240, Leu-284–Gly-301, Met-311–Gly-336, and Asp-344–Leu-363.

The protein belongs to the cytochrome b family. The main subunits of complex b-c1 are: cytochrome b, cytochrome c1 and the Rieske protein. The cofactor is heme b.

It localises to the mitochondrion inner membrane. Component of the ubiquinol-cytochrome c reductase complex (complex III or cytochrome b-c1 complex) that is part of the mitochondrial respiratory chain. The b-c1 complex mediates electron transfer from ubiquinol to cytochrome c. Contributes to the generation of a proton gradient across the mitochondrial membrane that is then used for ATP synthesis. This chain is Cytochrome b (mt:Cyt-b), found in Leptorhynchoides thecatus (Thorny-headed worm).